The primary structure comprises 270 residues: Undecaprenyl-diphosphatase 1 (270 aa).

Transmembrane regions (helical) follow at residues 41-61 (IEGFSFELLMNAGSLIAVLLV), 88-108 (FRFIIYLIIATIPAGVIGVLF), 117-137 (KDGVRITAVTLLITGLALFLI), 192-212 (FSFLLYIPVSLGGTILSITDI), 218-238 (LGELFLPYLFAFIASVIATYF), and 250-270 (GNLVYFSIYCFVIGIAVLIFA).

The protein belongs to the UppP family.

It is found in the cell membrane. It catalyses the reaction di-trans,octa-cis-undecaprenyl diphosphate + H2O = di-trans,octa-cis-undecaprenyl phosphate + phosphate + H(+). Functionally, catalyzes the dephosphorylation of undecaprenyl diphosphate (UPP). Confers resistance to bacitracin. This is Undecaprenyl-diphosphatase 1 from Bacillus licheniformis (strain ATCC 14580 / DSM 13 / JCM 2505 / CCUG 7422 / NBRC 12200 / NCIMB 9375 / NCTC 10341 / NRRL NRS-1264 / Gibson 46).